A 461-amino-acid polypeptide reads, in one-letter code: Protein FAM124B (461 aa).

Position 49 is a phosphoserine (serine 49). The interval 302 to 346 is disordered; the sequence is VELPEPGGRPVSDGSSNTWWKSAGGSAQPSSPATESQPQLSSLHL. The segment covering 323 to 334 has biased composition (low complexity); the sequence is SAGGSAQPSSPA.

It belongs to the FAM124 family. In terms of assembly, interacts with CHD7 and CHD8.

The protein localises to the nucleus. This chain is Protein FAM124B (FAM124B), found in Bos taurus (Bovine).